The sequence spans 154 residues: Large ribosomal subunit protein uL11 (154 aa).

This sequence belongs to the universal ribosomal protein uL11 family. In terms of assembly, part of the ribosomal stalk of the 50S ribosomal subunit. Interacts with L10 and the large rRNA to form the base of the stalk. L10 forms an elongated spine to which L12 dimers bind in a sequential fashion forming a multimeric L10(L12)X complex. In terms of processing, one or more lysine residues are methylated.

Forms part of the ribosomal stalk which helps the ribosome interact with GTP-bound translation factors. This Leuconostoc mesenteroides subsp. mesenteroides (strain ATCC 8293 / DSM 20343 / BCRC 11652 / CCM 1803 / JCM 6124 / NCDO 523 / NBRC 100496 / NCIMB 8023 / NCTC 12954 / NRRL B-1118 / 37Y) protein is Large ribosomal subunit protein uL11.